An 816-amino-acid chain; its full sequence is Leucine--tRNA ligase (816 aa).

The 'HIGH' region signature appears at S40–H51. The 'KMSKS' region motif lies at K576–S580. K579 is an ATP binding site.

This sequence belongs to the class-I aminoacyl-tRNA synthetase family.

Its subcellular location is the cytoplasm. It catalyses the reaction tRNA(Leu) + L-leucine + ATP = L-leucyl-tRNA(Leu) + AMP + diphosphate. In Clostridium perfringens (strain 13 / Type A), this protein is Leucine--tRNA ligase.